Reading from the N-terminus, the 482-residue chain is Caspase-8 (482 aa).

A propeptide spanning residues 1–218 (MDFHSCLYDI…DMWDSPGEQE (218 aa)) is cleaved from the precursor. DED domains lie at 2–80 (DFHS…RVLK) and 100–177 (AYRV…RIDD). 2 positions are modified to phosphoserine: serine 188 and serine 213. Histidine 319 is a catalytic residue. Tyrosine 336 is modified (phosphotyrosine). Residue cysteine 362 is part of the active site. A propeptide spanning residues 379–388 (LEQEHVLEED) is cleaved from the precursor. Serine 390 carries the post-translational modification Phosphoserine; by CDK1.

It belongs to the peptidase C14A family. Heterotetramer that consists of two anti-parallel arranged heterodimers, each one formed by a 18 kDa (p18) and a 10 kDa (p10) subunit. Component of the death-induced signaling complex (DISC) composed of cell surface receptor FAS/CD95 or TNFRSF1A, adapter protein FADD and the CASP8 protease; recruitment of CASP8 to the complex is required for processing of CASP8 into the p18 and p10 subunits. Component of the AIM2 PANoptosome complex, a multiprotein complex that drives inflammatory cell death (PANoptosis). Interacts with CFLAR and PEA15. Interacts with RFFL and RNF34; negatively regulate CASP8 through proteasomal degradation. Interacts with TNFAIP8L2. Interacts with CASP8AP2. Interacts with NOL3; decreases CASP8 activity in a mitochondria localization- and phosphorylation-dependent manner and this interaction is dissociated by calcium. Interacts with UBR2. Interacts with RIPK1. Interacts with stimulated TNFRSF10B; this interaction is followed by CASP8 proteolytic cleavage and activation. Generation of the subunits requires association with the death-inducing signaling complex (DISC), whereas additional processing is likely due to the autocatalytic activity of the activated protease. GZMB and CASP10 can be involved in these processing events. Post-translationally, phosphorylation on Ser-389 during mitosis by CDK1 inhibits activation by proteolysis and prevents apoptosis. This phosphorylation occurs in cancer cell lines, as well as in primary breast tissues and lymphocytes.

The protein resides in the cytoplasm. It localises to the nucleus. It carries out the reaction Strict requirement for Asp at position P1 and has a preferred cleavage sequence of (Leu/Asp/Val)-Glu-Thr-Asp-|-(Gly/Ser/Ala).. With respect to regulation, CASP8 activity is restricted by RIPK1. Thiol protease that plays a key role in programmed cell death by acting as a molecular switch for apoptosis, necroptosis and pyroptosis, and is required to prevent tissue damage during embryonic development and adulthood. Initiator protease that induces extrinsic apoptosis by mediating cleavage and activation of effector caspases responsible for FAS/CD95-mediated and TNFRSF1A-induced cell death. Cleaves and activates effector caspases CASP3, CASP4, CASP6, CASP7, CASP9 and CASP10. Binding to the adapter molecule FADD recruits it to either receptor FAS/CD95 or TNFRSF1A. The resulting aggregate called the death-inducing signaling complex (DISC) performs CASP8 proteolytic activation. The active dimeric enzyme is then liberated from the DISC and free to activate downstream apoptotic proteases. Proteolytic fragments of the N-terminal propeptide (termed CAP3, CAP5 and CAP6) are likely retained in the DISC. In addition to extrinsic apoptosis, also acts as a negative regulator of necroptosis: acts by cleaving RIPK1 at 'Asp-325', which is crucial to inhibit RIPK1 kinase activity, limiting TNF-induced apoptosis, necroptosis and inflammatory response. Also able to initiate pyroptosis by mediating cleavage and activation of gasdermin-C and -D (GSDMC and GSDMD, respectively): gasdermin cleavage promotes release of the N-terminal moiety that binds to membranes and forms pores, triggering pyroptosis. Initiates pyroptosis following inactivation of MAP3K7/TAK1. Also acts as a regulator of innate immunity by mediating cleavage and inactivation of N4BP1 downstream of TLR3 or TLR4, thereby promoting cytokine production. May participate in the Granzyme B (GZMB) cell death pathways. Cleaves PARP1 and PARP2. The chain is Caspase-8 from Rattus norvegicus (Rat).